A 433-amino-acid chain; its full sequence is Tyrosine--tRNA ligase (433 aa).

Tyr34 is a binding site for L-tyrosine. The 'HIGH' region signature appears at 39–48; it reads PTASSLHVGS. Positions 169 and 173 each coordinate L-tyrosine. The 'KMSKS' region signature appears at 229 to 233; it reads KMGKT. Lys232 contributes to the ATP binding site. The S4 RNA-binding domain occupies 364–432; the sequence is IPAFVLFHTV…RYHTIVVRKG (69 aa).

The protein belongs to the class-I aminoacyl-tRNA synthetase family. TyrS type 1 subfamily. As to quaternary structure, homodimer.

It localises to the cytoplasm. It carries out the reaction tRNA(Tyr) + L-tyrosine + ATP = L-tyrosyl-tRNA(Tyr) + AMP + diphosphate + H(+). In terms of biological role, catalyzes the attachment of tyrosine to tRNA(Tyr) in a two-step reaction: tyrosine is first activated by ATP to form Tyr-AMP and then transferred to the acceptor end of tRNA(Tyr). The chain is Tyrosine--tRNA ligase from Desulfosudis oleivorans (strain DSM 6200 / JCM 39069 / Hxd3) (Desulfococcus oleovorans).